A 341-amino-acid chain; its full sequence is Protein BIG GRAIN 1-like C (341 aa).

Disordered stretches follow at residues 28 to 61 and 76 to 138; these read DGLQ…LTTL and SSTT…SDDD. Basic and acidic residues predominate over residues 52–61; sequence NKKDDKLTTL. Positions 76–92 are enriched in low complexity; that stretch reads SSTTTTNSSDSSSFSSS. Basic and acidic residues predominate over residues 105 to 138; that stretch reads KLAEQGKRSGDERQRTKRTVMDNDSRLFSKSDDD.

It belongs to the BIG GRAIN 1 (BG1) plant protein family.

It is found in the cell membrane. Functionally, involved in auxin transport. Regulator of the auxin signaling pathway. This chain is Protein BIG GRAIN 1-like C, found in Arabidopsis thaliana (Mouse-ear cress).